The chain runs to 293 residues: 4-hydroxybenzoate octaprenyltransferase (293 aa).

8 helical membrane passes run 26-46 (IGTL…AKGM), 49-69 (IKVL…GCII), 102-122 (LFAL…PLVV), 148-168 (FLGI…LGEV), 173-193 (WWLF…YAMI), 217-237 (WIAV…LSAE), 240-260 (FIYA…QRLI), and 272-292 (FLNN…DYLL).

Belongs to the UbiA prenyltransferase family. It depends on Mg(2+) as a cofactor.

It localises to the cell inner membrane. The enzyme catalyses all-trans-octaprenyl diphosphate + 4-hydroxybenzoate = 4-hydroxy-3-(all-trans-octaprenyl)benzoate + diphosphate. Its pathway is cofactor biosynthesis; ubiquinone biosynthesis. In terms of biological role, catalyzes the prenylation of para-hydroxybenzoate (PHB) with an all-trans polyprenyl group. Mediates the second step in the final reaction sequence of ubiquinone-8 (UQ-8) biosynthesis, which is the condensation of the polyisoprenoid side chain with PHB, generating the first membrane-bound Q intermediate 3-octaprenyl-4-hydroxybenzoate. This chain is 4-hydroxybenzoate octaprenyltransferase, found in Shewanella denitrificans (strain OS217 / ATCC BAA-1090 / DSM 15013).